We begin with the raw amino-acid sequence, 333 residues long: Beta-ketoacyl-[acyl-carrier-protein] synthase III (333 aa).

Residues Cys-112 and His-255 contribute to the active site. Residues 256 to 260 form an ACP-binding region; that stretch reads QANQR. The active site involves Asn-285.

Belongs to the thiolase-like superfamily. FabH family. As to quaternary structure, homodimer.

The protein localises to the cytoplasm. It carries out the reaction malonyl-[ACP] + acetyl-CoA + H(+) = 3-oxobutanoyl-[ACP] + CO2 + CoA. Its pathway is lipid metabolism; fatty acid biosynthesis. Its function is as follows. Catalyzes the condensation reaction of fatty acid synthesis by the addition to an acyl acceptor of two carbons from malonyl-ACP. Catalyzes the first condensation reaction which initiates fatty acid synthesis and may therefore play a role in governing the total rate of fatty acid production. Possesses both acetoacetyl-ACP synthase and acetyl transacylase activities. Its substrate specificity determines the biosynthesis of branched-chain and/or straight-chain of fatty acids. This Synechococcus sp. (strain RCC307) protein is Beta-ketoacyl-[acyl-carrier-protein] synthase III.